The following is a 569-amino-acid chain: Urease subunit alpha (569 aa).

Positions 131–569 (GGFDAHIHFI…LPLAQRYFMY (439 aa)) constitute a Urease domain. The Ni(2+) site is built by histidine 136, histidine 138, and lysine 219. An N6-carboxylysine modification is found at lysine 219. Histidine 221 contributes to the substrate binding site. Ni(2+) is bound by residues histidine 248 and histidine 274. Histidine 322 (proton donor) is an active-site residue. A Ni(2+)-binding site is contributed by aspartate 362.

The protein belongs to the metallo-dependent hydrolases superfamily. Urease alpha subunit family. As to quaternary structure, heterotrimer of UreA (gamma), UreB (beta) and UreC (alpha) subunits. Three heterotrimers associate to form the active enzyme. Requires Ni cation as cofactor. Post-translationally, carboxylation allows a single lysine to coordinate two nickel ions.

The protein resides in the cytoplasm. It carries out the reaction urea + 2 H2O + H(+) = hydrogencarbonate + 2 NH4(+). The protein operates within nitrogen metabolism; urea degradation; CO(2) and NH(3) from urea (urease route): step 1/1. This Jannaschia sp. (strain CCS1) protein is Urease subunit alpha.